The sequence spans 275 residues: Hydroxyethylthiazole kinase (275 aa).

Met-53 provides a ligand contact to substrate. Residues Arg-128 and Ser-174 each coordinate ATP. A substrate-binding site is contributed by Gly-201.

This sequence belongs to the Thz kinase family. Mg(2+) is required as a cofactor.

The catalysed reaction is 5-(2-hydroxyethyl)-4-methylthiazole + ATP = 4-methyl-5-(2-phosphooxyethyl)-thiazole + ADP + H(+). The protein operates within cofactor biosynthesis; thiamine diphosphate biosynthesis; 4-methyl-5-(2-phosphoethyl)-thiazole from 5-(2-hydroxyethyl)-4-methylthiazole: step 1/1. In terms of biological role, catalyzes the phosphorylation of the hydroxyl group of 4-methyl-5-beta-hydroxyethylthiazole (THZ). The sequence is that of Hydroxyethylthiazole kinase from Kineococcus radiotolerans (strain ATCC BAA-149 / DSM 14245 / SRS30216).